We begin with the raw amino-acid sequence, 953 residues long: Coiled-coil domain-containing protein 14 (953 aa).

Residues 1-21 (MKRGIRRDPFRKRKLGGRAKK) show a composition bias toward basic residues. Disordered stretches follow at residues 1–22 (MKRG…AKKV) and 52–72 (SGAR…AKLT). A Phosphoserine modification is found at Ser-124. Disordered regions lie at residues 126–189 (SETA…TSDL) and 268–287 (PPCP…SQFA). Residues 145–154 (YGSKKKRHEK) are compositionally biased toward basic residues. Positions 169–187 (DNKKQIPNEASARSERDTS) are enriched in basic and acidic residues. A compositionally biased stretch (polar residues) spans 277 to 287 (EVQTDGNSQFA). 2 coiled-coil regions span residues 383–413 (LATN…RDTK) and 483–618 (AMQP…AEKE). Residues Ser-670, Ser-754, and Ser-798 each carry the phosphoserine modification.

As to quaternary structure, interacts with CEP63.

The protein resides in the cytoplasm. Its subcellular location is the cytoskeleton. It is found in the microtubule organizing center. It localises to the centrosome. The protein localises to the centriolar satellite. In terms of biological role, negatively regulates centriole duplication. Negatively regulates CEP63 and CDK2 centrosomal localization. The sequence is that of Coiled-coil domain-containing protein 14 (CCDC14) from Homo sapiens (Human).